The sequence spans 507 residues: Photosystem II CP47 reaction center protein (507 aa).

Residues G2–P16 lie on the Cytoplasmic side of the membrane. A helical membrane pass occupies residues G17–L39. The Lumenal, thylakoid segment spans residues Y40–E94. Residues G95–V116 traverse the membrane as a helical segment. At F117–D134 the chain is on the cytoplasmic side. A helical membrane pass occupies residues L135 to T159. The Lumenal, thylakoid segment spans residues G160–G196. A helical transmembrane segment spans residues G197 to T218. Topologically, residues V219–N233 are cytoplasmic. Residues I234 to T255 form a helical membrane-spanning segment. Over M256 to W450 the chain is Lumenal, thylakoid. The helical transmembrane segment at F451–L474 threads the bilayer. Residues F475–A507 are Cytoplasmic-facing.

The protein belongs to the PsbB/PsbC family. PsbB subfamily. PSII is composed of 1 copy each of membrane proteins PsbA, PsbB, PsbC, PsbD, PsbE, PsbF, PsbH, PsbI, PsbJ, PsbK, PsbL, PsbM, PsbT, PsbX, Psb30/Ycf12, peripheral proteins PsbO, CyanoQ (PsbQ), PsbU, PsbV and a large number of cofactors. It forms dimeric complexes. Contacts PsbQ. Binds multiple chlorophylls. PSII binds additional chlorophylls, carotenoids and specific lipids. serves as cofactor.

It is found in the cellular thylakoid membrane. Functionally, one of the components of the core complex of photosystem II (PSII). It binds chlorophyll and helps catalyze the primary light-induced photochemical processes of PSII. PSII is a light-driven water:plastoquinone oxidoreductase, using light energy to abstract electrons from H(2)O, generating O(2) and a proton gradient subsequently used for ATP formation. This Synechocystis sp. (strain ATCC 27184 / PCC 6803 / Kazusa) protein is Photosystem II CP47 reaction center protein.